The following is a 293-amino-acid chain: Ribosomal protein L11 methyltransferase (293 aa).

S-adenosyl-L-methionine contacts are provided by threonine 145, glycine 166, aspartate 188, and asparagine 229.

This sequence belongs to the methyltransferase superfamily. PrmA family.

It localises to the cytoplasm. It carries out the reaction L-lysyl-[protein] + 3 S-adenosyl-L-methionine = N(6),N(6),N(6)-trimethyl-L-lysyl-[protein] + 3 S-adenosyl-L-homocysteine + 3 H(+). In terms of biological role, methylates ribosomal protein L11. In Halorhodospira halophila (strain DSM 244 / SL1) (Ectothiorhodospira halophila (strain DSM 244 / SL1)), this protein is Ribosomal protein L11 methyltransferase.